The following is a 242-amino-acid chain: Probable transcriptional regulatory protein PG_0097 (242 aa).

It belongs to the TACO1 family.

It localises to the cytoplasm. The chain is Probable transcriptional regulatory protein PG_0097 from Porphyromonas gingivalis (strain ATCC BAA-308 / W83).